A 254-amino-acid polypeptide reads, in one-letter code: AA9 family lytic polysaccharide monooxygenase A (254 aa).

A signal peptide spans 1–19 (MKYSILGLTALSFVASAAA). Residue His20 coordinates Cu(2+). Methylhistidine is present on His20. Val28 provides a ligand contact to (1,4-beta-D-glucosyl)n. N-linked (GlcNAc...) asparagine glycosylation occurs at Asn52. Cys60 and Cys186 are oxidised to a cystine. (1,4-beta-D-glucosyl)n is bound by residues Val66, Val67, Asp77, and Asn86. A Cu(2+)-binding site is contributed by His97. Asn129 carries N-linked (GlcNAc...) asparagine glycosylation. (1,4-beta-D-glucosyl)n-binding residues include Val148 and Arg159. O2 is bound by residues His166 and Gln181. Tyr183 provides a ligand contact to Cu(2+).

Belongs to the polysaccharide monooxygenase AA9 family. Requires Cu(2+) as cofactor. The catalytically essential N-terminal histidine His-20 is post-translationally modified by methylation to prevent protonation of the histidine side chain, and protect the critical active site of the enzyme from oxidative damage.

It localises to the secreted. It catalyses the reaction [(1-&gt;4)-beta-D-glucosyl]n+m + reduced acceptor + O2 = 4-dehydro-beta-D-glucosyl-[(1-&gt;4)-beta-D-glucosyl]n-1 + [(1-&gt;4)-beta-D-glucosyl]m + acceptor + H2O.. The polyphenol cinnamtannin B1 contained in methanolic extract of Cinnamomum cassia (cinnamon) acts as an inhibitor of catalytic activity. In terms of biological role, lytic polysaccharide monooxygenase (LPMO) that depolymerizes crystalline and amorphous polysaccharides via the oxidation of scissile alpha- or beta-(1-4)-glycosidic bonds, yielding C1 or C4 oxidation product. Catalysis by LPMOs requires the reduction of the active-site copper from Cu(II) to Cu(I) by a reducing agent and H(2)O(2) or O(2) as a cosubstrate. Is able to cleave phosphoric acid swollen cellulose (PASC) in the presence of a reducing agent, yielding a range of cellooligosaccharides dominated by cellobiose and cellotriose. Activity is less sensitive to the reducing agent potential when cleaving xylan, suggesting that distinct catalytic mechanisms exist for xylan and glucan cleavage. The chain is AA9 family lytic polysaccharide monooxygenase A from Panus similis (Lentinoid fungus).